We begin with the raw amino-acid sequence, 447 residues long: Tubulin alpha chain (447 aa).

7 residues coordinate GTP: Gln-11, Glu-71, Gly-144, Thr-145, Thr-179, Asn-206, and Asn-228. Glu-71 serves as a coordination point for Mg(2+). Residue Glu-254 is part of the active site.

The protein belongs to the tubulin family. Dimer of alpha and beta chains. A typical microtubule is a hollow water-filled tube with an outer diameter of 25 nm and an inner diameter of 15 nM. Alpha-beta heterodimers associate head-to-tail to form protofilaments running lengthwise along the microtubule wall with the beta-tubulin subunit facing the microtubule plus end conferring a structural polarity. Microtubules usually have 13 protofilaments but different protofilament numbers can be found in some organisms and specialized cells. It depends on Mg(2+) as a cofactor.

The protein resides in the cytoplasm. Its subcellular location is the cytoskeleton. It carries out the reaction GTP + H2O = GDP + phosphate + H(+). In terms of biological role, tubulin is the major constituent of microtubules, a cylinder consisting of laterally associated linear protofilaments composed of alpha- and beta-tubulin heterodimers. Microtubules grow by the addition of GTP-tubulin dimers to the microtubule end, where a stabilizing cap forms. Below the cap, tubulin dimers are in GDP-bound state, owing to GTPase activity of alpha-tubulin. The sequence is that of Tubulin alpha chain (TUBA) from Avena sativa (Oat).